The chain runs to 473 residues: Adenosylhomocysteinase (473 aa).

T64, D139, and E199 together coordinate substrate. 200–202 (TTT) is a binding site for NAD(+). K229 and D233 together coordinate substrate. NAD(+)-binding positions include N234, 263 to 268 (GYGDVG), E286, N321, 342 to 344 (IGH), and N387.

The protein belongs to the adenosylhomocysteinase family. It depends on NAD(+) as a cofactor.

It is found in the cytoplasm. It carries out the reaction S-adenosyl-L-homocysteine + H2O = L-homocysteine + adenosine. The protein operates within amino-acid biosynthesis; L-homocysteine biosynthesis; L-homocysteine from S-adenosyl-L-homocysteine: step 1/1. Functionally, may play a key role in the regulation of the intracellular concentration of adenosylhomocysteine. This is Adenosylhomocysteinase from Paraburkholderia phymatum (strain DSM 17167 / CIP 108236 / LMG 21445 / STM815) (Burkholderia phymatum).